Reading from the N-terminus, the 141-residue chain is Sporulation-specific cell division protein SsgB (141 aa).

It belongs to the SsgA family. Interacts with SsgA. Interacts with FtsZ (via N-terminus).

The protein resides in the cell septum. In terms of biological role, involved in sporulation-specific cell division. Required for early stages of sporulation. Important in the process of growth cessation prior to sporulation-specific cell division. Recruits cell division protein FtsZ to the future septum sites and tethers the contractile ring structure (Z ring) to the cytoplasmic membrane during sporulation. Stimulates polymerization and filament length of FtsZ in vitro. The protein is Sporulation-specific cell division protein SsgB of Saccharopolyspora erythraea (strain ATCC 11635 / DSM 40517 / JCM 4748 / NBRC 13426 / NCIMB 8594 / NRRL 2338).